Consider the following 481-residue polypeptide: MIQGTGSSVGKSLLVAGVSRALTRRGLVVRPFKPQNMSNNAAIAADGGEIGRAQALQARACRISPSHHMNPVLLKPQSEIGAQIVVQGKVHGQATARAYQAMKPQLLGTVLESFGILRKQADIVLVEGAGSASEINLRAGDIANMGFARAANVPVVIAGDIDRGGVIAALVGTKTVLDPDDAAMVRGFLVNRMRGDPSLFAEGMRLIEQQTGWEALGLVPHCEAARALPAEDAADLLRGLSAPTRSGNTVIAVPMLPHIANFDDLDPLAAEDSVTLVMVPPGQPLPVADAIIIPGSKTVIADLAALRHHGWDIDILAHRRRGRSIIGLCGGYQMLGRAIHDPQGFEGPAGSAAGLGLLEIETVLEPHKILTSRSGHLFNHDVPVSGYEMHMGITTGSGLRRPLLSLGPDAPEGCVSADGVVMGTYLHGLFHGGAFRRHLLATLDVSSHGGDHEDAVEHALDALADHMEAHVAIDRLLALSA.

In terms of domain architecture, GATase cobBQ-type spans 248–435; sequence NTVIAVPMLP…LHGLFHGGAF (188 aa). Catalysis depends on Cys329, which acts as the Nucleophile. His427 is an active-site residue.

This sequence belongs to the CobB/CobQ family. CobQ subfamily.

The protein operates within cofactor biosynthesis; adenosylcobalamin biosynthesis. In terms of biological role, catalyzes amidations at positions B, D, E, and G on adenosylcobyrinic A,C-diamide. NH(2) groups are provided by glutamine, and one molecule of ATP is hydrogenolyzed for each amidation. The sequence is that of Cobyric acid synthase from Granulibacter bethesdensis (strain ATCC BAA-1260 / CGDNIH1).